The following is a 227-amino-acid chain: tRNA (guanine-N(1)-)-methyltransferase (227 aa).

S-adenosyl-L-methionine contacts are provided by residues Gly112 and 131-136 (LGDFVL).

It belongs to the RNA methyltransferase TrmD family. As to quaternary structure, homodimer.

It localises to the cytoplasm. The enzyme catalyses guanosine(37) in tRNA + S-adenosyl-L-methionine = N(1)-methylguanosine(37) in tRNA + S-adenosyl-L-homocysteine + H(+). In terms of biological role, specifically methylates guanosine-37 in various tRNAs. This is tRNA (guanine-N(1)-)-methyltransferase from Trichodesmium erythraeum (strain IMS101).